The following is a 541-amino-acid chain: Arginine-containing cyclodipeptide synthase avaA (541 aa).

Positions 428-432 match the Conserved DDXXE motif motif; the sequence is DDIAE.

This sequence belongs to the arginine-containing cyclodipeptide synthase family.

It catalyses the reaction L-tryptophyl-tRNA(Trp) + L-arginyl-tRNA(Arg) = cyclo(L-arginyl-L-tryptophyl) + tRNA(Trp) + tRNA(Arg) + H(+). It participates in secondary metabolite biosynthesis. Functionally, arginine-containing cyclodipeptide synthase; part of the cluster that mediates the biosynthesis of a highly modified cyclo-arginine-tryptophan dipeptide (cRW). Within the pathway, avaA acts as the scaffold-generating enzyme and is responsible for formation of the cyclo-Arg-Trp diketopiperazine (cRW) from L-arginyl-tRNA(Arg) + L-tryptophanyl-tRNA(Trp). AvaB then acts as a multifunctional flavoenzyme that is responsible for generating the cyclo-Arg-formylkynurenine DKP, which can be deformylated by avaC. AvaB then catalyzes an additional N-oxidation followed by cyclization and dehydration. The next step is an N-acetylation of the guanidine group catalyzed by the arginine N-acetyltransferase AvaD. The role of the additional enzymes identified within the ava cluster still have to be determined. This is Arginine-containing cyclodipeptide synthase avaA from Aspergillus versicolor.